The primary structure comprises 130 residues: MSNKSRKIRSRGGKRGVQKGVIHIQASFNNTIITVTDVRGQVIIWSSAGACGFKGTRKSTPFAAQAAAENAIKASVDRGMKQAEVMMSGPGPGRDTALRAIRRSGIILSFIRDVTPMPYNGCRPPRKRRV.

Belongs to the universal ribosomal protein uS11 family. Part of the 30S ribosomal subunit.

It is found in the plastid. The protein localises to the chloroplast. The protein is Small ribosomal subunit protein uS11c of Adiantum capillus-veneris (Maidenhair fern).